Consider the following 435-residue polypeptide: ATP-dependent RNA helicase SUB2 (435 aa).

Residues 1–40 (MSHEGQEELLDYSDSEEIAVPTTTAPSAAAGEGANDKEAD) are disordered. The span at 7-17 (EELLDYSDSEE) shows a compositional bias: acidic residues. Residues 19 to 33 (AVPTTTAPSAAAGEG) are compositionally biased toward low complexity. Positions 51–79 (TGFRDFLLKPELLRAIGDCGFEHPSEVQQ) match the Q motif motif. The region spanning 82–257 (IPQSILGTDV…KKFMQNPLEI (176 aa)) is the Helicase ATP-binding domain. 95 to 102 (AKSGLGKT) lines the ATP pocket. The short motif at 204–207 (DECD) is the DECD box element. Positions 269 to 430 (GLQQYYIKLD…EFPEEGVDPS (162 aa)) constitute a Helicase C-terminal domain.

Belongs to the DEAD box helicase family. DECD subfamily.

It localises to the nucleus. The enzyme catalyses ATP + H2O = ADP + phosphate + H(+). ATP-binding RNA helicase involved in transcription elongation and required for the export of mRNA out of the nucleus. SUB2 also plays a role in pre-mRNA splicing and spliceosome assembly. May be involved in rDNA and telomeric silencing, and maintenance of genome integrity. The chain is ATP-dependent RNA helicase SUB2 (SUB2) from Debaryomyces hansenii (strain ATCC 36239 / CBS 767 / BCRC 21394 / JCM 1990 / NBRC 0083 / IGC 2968) (Yeast).